The sequence spans 568 residues: Transport inhibitor response 1-like protein Os11g0515500 (568 aa).

The 45-residue stretch at 1–45 folds into the F-box domain; it reads MVFFPEEVVEHILGFLASHRDRNAVSLVCREWYRVERLSRRSVLV. Residues K69, 103–104, and R335 each bind 1D-myo-inositol hexakisphosphate; that span reads KR. Positions 338–343 are interaction with auxin-responsive proteins; that stretch reads PANANA. 1D-myo-inositol hexakisphosphate is bound at residue 390–392; sequence SFR. The interval 394 to 398 is interaction with auxin-responsive proteins; it reads CVLDP. R425 is a binding site for 1D-myo-inositol hexakisphosphate. Residues 453–454 are interaction with auxin-responsive proteins; sequence AF. 1D-myo-inositol hexakisphosphate-binding positions include 473–474 and R498; that span reads KK.

Part of a SCF (SKP1-cullin-F-box) protein ligase complex. May interact with auxin and auxin-responsive proteins.

The protein localises to the nucleus. It participates in protein modification; protein ubiquitination. This is Transport inhibitor response 1-like protein Os11g0515500 from Oryza sativa subsp. japonica (Rice).